The primary structure comprises 339 residues: Fructose-1,6-bisphosphatase isozyme 2 (339 aa).

Residues 3–10 form an important for interaction with ALDOA region; it reads DRSPFETD. AMP contacts are provided by residues Val18 and 28–32; that span reads TGELT. Mg(2+)-binding residues include Asp69 and Glu98. 113-114 provides a ligand contact to AMP; sequence KY. Mg(2+)-binding residues include Asp119, Leu121, and Asp122. Residue Asp122 coordinates substrate. Arg141 contributes to the AMP binding site. Positions 204-208 match the Nuclear localization signal motif; the sequence is KKKGK. Residue 213–216 participates in substrate binding; it reads NEGY. A phosphotyrosine mark is found at Tyr216 and Tyr219. Substrate contacts are provided by residues 245–249, Tyr265, and Lys275; that span reads YVGSM. Glu281 serves as a coordination point for Mg(2+).

The protein belongs to the FBPase class 1 family. In terms of assembly, homotetramer. Interacts with ALDOA; the interaction blocks inhibition by physiological concentrations of AMP and reduces inhibition by Ca(2+). Interacts with alpha-actinin and F-actin. Mg(2+) is required as a cofactor. As to expression, expressed in muscle, intestine, brain and placenta and very weakly in liver.

The protein localises to the cell junction. It is found in the cytoplasm. The protein resides in the nucleus. Its subcellular location is the myofibril. It localises to the sarcomere. The protein localises to the z line. The catalysed reaction is beta-D-fructose 1,6-bisphosphate + H2O = beta-D-fructose 6-phosphate + phosphate. It functions in the pathway carbohydrate biosynthesis; gluconeogenesis. Its activity is regulated as follows. Subject to complex allosteric regulation. The enzyme can assume an active R-state, or an inactive T-state. Intermediate conformations may exist. AMP acts as an allosteric inhibitor. Fructose 2,6-bisphosphate acts as a competitive inhibitor. Strongly inhibited by Ca(2+). Its function is as follows. Catalyzes the hydrolysis of fructose 1,6-bisphosphate to fructose 6-phosphate in the presence of divalent cations and probably participates in glycogen synthesis from carbohydrate precursors, such as lactate. This Mus musculus (Mouse) protein is Fructose-1,6-bisphosphatase isozyme 2 (Fbp2).